A 126-amino-acid polypeptide reads, in one-letter code: Large ribosomal subunit protein bL12 (126 aa).

It belongs to the bacterial ribosomal protein bL12 family. Homodimer. Part of the ribosomal stalk of the 50S ribosomal subunit. Forms a multimeric L10(L12)X complex, where L10 forms an elongated spine to which 2 to 4 L12 dimers bind in a sequential fashion. Binds GTP-bound translation factors.

Its function is as follows. Forms part of the ribosomal stalk which helps the ribosome interact with GTP-bound translation factors. Is thus essential for accurate translation. The polypeptide is Large ribosomal subunit protein bL12 (Desulforudis audaxviator (strain MP104C)).